We begin with the raw amino-acid sequence, 182 residues long: ADP-ribosylation factor 1 (182 aa).

The N-myristoyl glycine moiety is linked to residue Gly-2. GTP-binding positions include 24–31 (GLDAAGKT), 67–71 (DVGGQ), and 126–129 (NKQD).

The protein belongs to the small GTPase superfamily. Arf family.

The protein resides in the golgi apparatus. It catalyses the reaction GTP + H2O = GDP + phosphate + H(+). Functionally, GTP-binding protein involved in protein trafficking; may modulate vesicle budding and uncoating within the Golgi apparatus. This chain is ADP-ribosylation factor 1 (arfA), found in Dictyostelium discoideum (Social amoeba).